The chain runs to 288 residues: Probable anion import ATP-binding protein HVO_1886 (288 aa).

A compositionally biased stretch (basic and acidic residues) spans 1–18 (MTTERPDAGDSGSEKPDE). The interval 1–33 (MTTERPDAGDSGSEKPDETAAPDPAANGARRSK) is disordered. In terms of domain architecture, ABC transporter spans 36-282 (LAARSLGHGF…PDDDRVRQFV (247 aa)). Residue 68 to 75 (GPSGTGKT) participates in ATP binding.

The protein belongs to the ABC transporter superfamily. As to quaternary structure, the complex is composed of two ATP-binding proteins (HVO_1886), two transmembrane proteins (HVO_1887) and a solute-binding protein (HVO_1888).

The protein resides in the cell membrane. Functionally, part of an ABC transporter complex involved in anions import. Responsible for energy coupling to the transport system. The protein is Probable anion import ATP-binding protein HVO_1886 of Haloferax volcanii (strain ATCC 29605 / DSM 3757 / JCM 8879 / NBRC 14742 / NCIMB 2012 / VKM B-1768 / DS2) (Halobacterium volcanii).